The sequence spans 129 residues: Lysozyme C (129 aa).

The C-type lysozyme domain maps to 1 to 129 (KVYGRCELAA…VHAWIRGCRL (129 aa)). 4 cysteine pairs are disulfide-bonded: C6–C127, C30–C115, C64–C80, and C76–C94. Active-site residues include E35 and D52.

This sequence belongs to the glycosyl hydrolase 22 family. In terms of assembly, monomer.

It localises to the secreted. It catalyses the reaction Hydrolysis of (1-&gt;4)-beta-linkages between N-acetylmuramic acid and N-acetyl-D-glucosamine residues in a peptidoglycan and between N-acetyl-D-glucosamine residues in chitodextrins.. Lysozymes have primarily a bacteriolytic function; those in tissues and body fluids are associated with the monocyte-macrophage system and enhance the activity of immunoagents. The protein is Lysozyme C (LYZ) of Pavo cristatus (Indian peafowl).